The following is a 60-amino-acid chain: Metallothionein A (60 aa).

Positions 1–28 (MDPCECSKSGNCNCGGSCTCTNCSCKSC) are beta. Cysteine 4, cysteine 6, cysteine 12, cysteine 14, cysteine 18, cysteine 20, cysteine 23, cysteine 25, cysteine 28, cysteine 32, cysteine 33, cysteine 35, cysteine 36, cysteine 40, cysteine 43, cysteine 47, cysteine 49, cysteine 54, cysteine 58, and cysteine 59 together coordinate a divalent metal cation. The alpha stretch occupies residues 29 to 60 (KKSCCPCCPSGCTKCASGCVCIGKTCDTSCCQ).

This sequence belongs to the metallothionein superfamily. Type 1 family.

Its function is as follows. Metallothioneins have a high content of cysteine residues that bind various heavy metals. The chain is Metallothionein A (mta) from Chaenocephalus aceratus (Blackfin icefish).